Here is a 184-residue protein sequence, read N- to C-terminus: Gastrokine-1 (184 aa).

Positions 1 to 20 are cleaved as a signal peptide; sequence MKLTMFVVGLLGLLAAPGFA. One can recognise a BRICHOS domain in the interval 54–148; the sequence is NNGWDSWNSL…MCRGIPTYVA (95 aa). Cysteines 81 and 140 form a disulfide.

The protein belongs to the gastrokine family. In terms of tissue distribution, expressed in the stomach. Highly expressed specifically in surface cells of the antrum mucosa from where it is secreted.

Its subcellular location is the secreted. It localises to the cytoplasmic granule. It is found in the golgi apparatus. Functionally, has mitogenic activity and may be involved in maintaining the integrity of the gastric mucosal epithelium. The polypeptide is Gastrokine-1 (Gkn1) (Mus musculus (Mouse)).